The primary structure comprises 1148 residues: MVKDNRDSDQDQDFSSAHMKRQPEQQQLQQHQFPSKKQRISHHDDSHQINHRPVTSCTHCRQHKIKCDASQNFPHPCSRCEKIGLHCEINPQFRPKKGSQLQLLRQDVDEIKSKLDTLLANDSVFVHLLQQIPMGNSLLNKLNLHPTPTPGTIIPNPDSSPSSGSPTSSAAQRDSKVSVQTYLSREPQLLQANQGSNTNKFKANNEASSHMTLRASSLAQDSKGLVATEPNKLPPLLNDSALPNNSKESLPPALQMAFYKNNSAGNTPNGPFSPIQKTYSPHTTSTTVTTTTNQPPFAATSHVATNNNADRTKTPVVATTTTMPLLPSPHANVDEFVLGDISISIEKANRLHHIFVTRYLPYFPIMYSNNATELYSQSQLLFWTVMLTACLSDPEPTMYCKLSSLIKQLAIETCWIRTPRSTHISQALLILCIWPLPNQKVLDDCSYRFVGLAKSLSYQLGLHRGEFISEFTRTQTSMPNAEKWRTRTWLGIFFAELCWASILGLPPTSQTDYLLEKALSCGDEESEEDNNDSIDNNNNDKRNKKDEPHVESKYKLPGSFRRLLSLANFQAKLSHIIGSSTSSPDGLLEPKYRAETLSILGKELDLLAKTLNFQSDDTVNIYFLYVKLTVCCFAFLPETPPTDQIPYVTEAYLTATKIVTLLNNLLETHQLIELPIYIRQAATFSALILFKLQLTPLLPDKYFDSARQSVVTIHRLYRNQLTAWATSVENDISRTASMLEKLNFVLIMHPEVFVEEDGIISRMRSHLTGSLFYDLVWCVHEARRREMDPEYNKQALEKAAKKRKFSSNGIYNGTSSTGGITDRKLYPLPLYNHISRDDFETVTKTTPSGTTVTTLVPTKNALKQAEKLAKTNNGDSDGSIMEINGIPLSMLGETGSVKFQSLFANTSNSNDYNNNRTLLDASNDISIPSNSIYPVASVPASNNNPQSTKVDYYSNGPSVIPDLSMKRSVSTPVNHFPASVPGLRNHPVGNLSNNVTLGIDHPIPREHSNLQNVTMNYNNQFSNANAIGRSQSSMSHSRTPIASKSNNMTDLHSVVSDPGSSKSTAYPPLSLFSKSNDINSNKTNQRFSTGTNTVTSSNFQTIDNENNVKTPGNKLTDFFQQQSAGWIEGNSSNDDFFGWFDMNMEQGF.

The interval 1–51 is disordered; that stretch reads MVKDNRDSDQDQDFSSAHMKRQPEQQQLQQHQFPSKKQRISHHDDSHQINH. Position 8 is a phosphoserine (Ser8). The zn(2)-C6 fungal-type DNA-binding region spans 57-87; the sequence is CTHCRQHKIKCDASQNFPHPCSRCEKIGLHC. The interval 148 to 180 is disordered; that stretch reads PTPGTIIPNPDSSPSSGSPTSSAAQRDSKVSVQ. Residues 150–169 show a composition bias toward low complexity; that stretch reads PGTIIPNPDSSPSSGSPTSS. Ser263 carries the post-translational modification Phosphoserine. Residues 524–550 are disordered; that stretch reads EESEEDNNDSIDNNNNDKRNKKDEPHV. Positions 538–550 are enriched in basic and acidic residues; that stretch reads NNDKRNKKDEPHV. A Phosphoserine modification is found at Ser806. Positions 1029 to 1050 are enriched in polar residues; it reads RSQSSMSHSRTPIASKSNNMTD. A disordered region spans residues 1029–1063; it reads RSQSSMSHSRTPIASKSNNMTDLHSVVSDPGSSKS.

The protein localises to the nucleus. In terms of biological role, putative transcription factor that seems to be involved in the sporulation process. Suppresses the lethal phenotype of RPM2 deletion. The sequence is that of Putative transcription factor SEF1 (SEF1) from Saccharomyces cerevisiae (strain ATCC 204508 / S288c) (Baker's yeast).